Consider the following 214-residue polypeptide: Triosephosphate isomerase (214 aa).

6–8 (NLK) contacts substrate. His85 functions as the Electrophile in the catalytic mechanism. Residue Glu133 is the Proton acceptor of the active site. Residues Ile138, Gly173, and 194–195 (AS) contribute to the substrate site.

This sequence belongs to the triosephosphate isomerase family. As to quaternary structure, homotetramer; dimer of dimers.

Its subcellular location is the cytoplasm. It catalyses the reaction D-glyceraldehyde 3-phosphate = dihydroxyacetone phosphate. It participates in carbohydrate biosynthesis; gluconeogenesis. It functions in the pathway carbohydrate degradation; glycolysis; D-glyceraldehyde 3-phosphate from glycerone phosphate: step 1/1. Functionally, involved in the gluconeogenesis. Catalyzes stereospecifically the conversion of dihydroxyacetone phosphate (DHAP) to D-glyceraldehyde-3-phosphate (G3P). This Halobacterium salinarum (strain ATCC 700922 / JCM 11081 / NRC-1) (Halobacterium halobium) protein is Triosephosphate isomerase.